A 968-amino-acid chain; its full sequence is Alanine--tRNA ligase, cytoplasmic (968 aa).

Met1 is subject to N-acetylmethionine. ATP-binding positions include Arg77, His95, Trp176, and 214–216; that span reads IWN. Residues Asn216 and Asp239 each coordinate L-alanine. Gly243 serves as a coordination point for ATP. Ser399 and Ser555 each carry phosphoserine. Residues His605, His609, Cys723, and His727 each contribute to the Zn(2+) site. The Nuclear localization signal signature appears at 750–763; the sequence is RRIVAVTGAEAQKA. An N6-acetyllysine modification is found at Lys876. Lys943 bears the N6,N6,N6-trimethyllysine; alternate mark. Position 943 is an N6,N6-dimethyllysine; alternate (Lys943). The residue at position 943 (Lys943) is an N6-methyllysine; alternate.

Belongs to the class-II aminoacyl-tRNA synthetase family. Monomer. Interacts with ANKRD16; the interaction is direct. Zn(2+) serves as cofactor. In terms of processing, ISGylated. Post-translationally, methylation at 'Lys-943' by METTL21C.

The protein resides in the cytoplasm. It is found in the nucleus. The catalysed reaction is tRNA(Ala) + L-alanine + ATP = L-alanyl-tRNA(Ala) + AMP + diphosphate. It catalyses the reaction (S)-lactate + ATP + H(+) = (S)-lactoyl-AMP + diphosphate. The enzyme catalyses (S)-lactoyl-AMP + L-lysyl-[protein] = N(6)-[(S)-lactoyl]-L-lysyl-[protein] + AMP + 2 H(+). The protein lactyltransferase activity is inhibited by beta-alanine. Catalyzes the attachment of alanine to tRNA(Ala) in a two-step reaction: alanine is first activated by ATP to form Ala-AMP and then transferred to the acceptor end of tRNA(Ala). Also edits incorrectly charged tRNA(Ala) via its editing domain. In presence of high levels of lactate, also acts as a protein lactyltransferase that mediates lactylation of lysine residues in target proteins, such as TEAD1, TP53/p53 and YAP1. Protein lactylation takes place in a two-step reaction: lactate is first activated by ATP to form lactate-AMP and then transferred to lysine residues of target proteins. Acts as an inhibitor of TP53/p53 activity by catalyzing lactylation of TP53/p53. Acts as a positive regulator of the Hippo pathway by mediating lactylation of TEAD1 and YAP1. The polypeptide is Alanine--tRNA ligase, cytoplasmic (Mus musculus (Mouse)).